A 152-amino-acid chain; its full sequence is Transcriptional regulator MraZ (152 aa).

2 consecutive SpoVT-AbrB domains span residues 5–52 and 81–124; these read ASAI…PLEA and AHEC…DEAA.

Belongs to the MraZ family. As to quaternary structure, forms oligomers.

It is found in the cytoplasm. It localises to the nucleoid. The polypeptide is Transcriptional regulator MraZ (Shewanella loihica (strain ATCC BAA-1088 / PV-4)).